Consider the following 552-residue polypeptide: Glutamine--tRNA ligase (552 aa).

A 'HIGH' region motif is present at residues 33–43; sequence PEPNGYLHIGH. ATP-binding positions include 34 to 36 and 40 to 46; these read EPN and HIGHAKS. Positions 66 and 210 each coordinate L-glutamine. ATP is bound by residues Thr-229, 259 to 260, and 267 to 269; these read RL and MSK. Residues 266–270 carry the 'KMSKS' region motif; it reads VMSKR.

This sequence belongs to the class-I aminoacyl-tRNA synthetase family. Monomer.

It localises to the cytoplasm. It carries out the reaction tRNA(Gln) + L-glutamine + ATP = L-glutaminyl-tRNA(Gln) + AMP + diphosphate. The chain is Glutamine--tRNA ligase from Clostridium perfringens (strain ATCC 13124 / DSM 756 / JCM 1290 / NCIMB 6125 / NCTC 8237 / Type A).